Consider the following 513-residue polypeptide: ATP synthase subunit alpha (513 aa).

ATP is bound at residue 169-176; it reads GDRQTGKT.

The protein belongs to the ATPase alpha/beta chains family. As to quaternary structure, F-type ATPases have 2 components, CF(1) - the catalytic core - and CF(0) - the membrane proton channel. CF(1) has five subunits: alpha(3), beta(3), gamma(1), delta(1), epsilon(1). CF(0) has three main subunits: a(1), b(2) and c(9-12). The alpha and beta chains form an alternating ring which encloses part of the gamma chain. CF(1) is attached to CF(0) by a central stalk formed by the gamma and epsilon chains, while a peripheral stalk is formed by the delta and b chains.

The protein resides in the cell inner membrane. The catalysed reaction is ATP + H2O + 4 H(+)(in) = ADP + phosphate + 5 H(+)(out). In terms of biological role, produces ATP from ADP in the presence of a proton gradient across the membrane. The alpha chain is a regulatory subunit. This Proteus mirabilis (strain HI4320) protein is ATP synthase subunit alpha.